We begin with the raw amino-acid sequence, 102 residues long: NADH-quinone oxidoreductase subunit K (102 aa).

A run of 3 helical transmembrane segments spans residues 6 to 26 (LGQGLLLAAILFALGLVGVLV), 30 to 50 (LLFMLMSLEVMLNAAGVAFIV), and 64 to 84 (FILVLTLAAAEVSVGLALILL).

It belongs to the complex I subunit 4L family. NDH-1 is composed of 14 different subunits. Subunits NuoA, H, J, K, L, M, N constitute the membrane sector of the complex.

The protein localises to the cell inner membrane. It catalyses the reaction a quinone + NADH + 5 H(+)(in) = a quinol + NAD(+) + 4 H(+)(out). Functionally, NDH-1 shuttles electrons from NADH, via FMN and iron-sulfur (Fe-S) centers, to quinones in the respiratory chain. The immediate electron acceptor for the enzyme in this species is believed to be ubiquinone. Couples the redox reaction to proton translocation (for every two electrons transferred, four hydrogen ions are translocated across the cytoplasmic membrane), and thus conserves the redox energy in a proton gradient. The chain is NADH-quinone oxidoreductase subunit K from Acidiphilium cryptum (strain JF-5).